Here is a 274-residue protein sequence, read N- to C-terminus: Protein STAY-GREEN, chloroplastic (274 aa).

The transit peptide at 1–48 directs the protein to the chloroplast; sequence MAAATSTMSLIPPITQQQRWHAADSLVVLASRRHDSRRRRRCRYVVPR.

This sequence belongs to the staygreen family.

The protein resides in the plastid. It localises to the chloroplast. In terms of biological role, involved in the disassembling mechanism of the intact light-harvesting complex of photosystem II (LHCPII) in the thylakoid membranes. Required to trigger chlorophyll degradation during natural and dark-induced leaf senescence. The polypeptide is Protein STAY-GREEN, chloroplastic (SGR) (Oryza sativa subsp. indica (Rice)).